Reading from the N-terminus, the 227-residue chain is MAAKAFPPFECSYRGSLLAGVDEVGRGPLIGAVVTAAVILDPARPIPGLADSKKLTEKKRLRLYDDILENAAAWSLGRCEASEIDELNIYQATMLAMKRAVEGLSIAPEYVLVDGNRCPKWQWPSEPVIKGDSRVEAISAASILAKVTRDREMEALDVRFPGFGLAQHKGYPTPVHLEALNRLGVTPEHRRSFRPVKMALDAVGVYGGSSAPVQELNYPADLFENID.

Residues 16–205 enclose the RNase H type-2 domain; the sequence is SLLAGVDEVG…VKMALDAVGV (190 aa). A divalent metal cation is bound by residues Asp-22, Glu-23, and Asp-114.

Belongs to the RNase HII family. It depends on Mn(2+) as a cofactor. Mg(2+) is required as a cofactor.

It is found in the cytoplasm. It catalyses the reaction Endonucleolytic cleavage to 5'-phosphomonoester.. Functionally, endonuclease that specifically degrades the RNA of RNA-DNA hybrids. This Marinobacter nauticus (strain ATCC 700491 / DSM 11845 / VT8) (Marinobacter aquaeolei) protein is Ribonuclease HII.